Here is a 273-residue protein sequence, read N- to C-terminus: Dermonecrotic toxin LafSicTox-betaIE1 (273 aa).

Residue H5 is part of the active site. Mg(2+)-binding residues include E25 and D27. H41 serves as the catalytic Nucleophile. 2 disulfides stabilise this stretch: C45–C51 and C47–C189. Residue D85 coordinates Mg(2+). N250 carries an N-linked (GlcNAc...) asparagine glycan.

The protein belongs to the arthropod phospholipase D family. Class II subfamily. The cofactor is Mg(2+). Expressed by the venom gland.

The protein localises to the secreted. The enzyme catalyses an N-(acyl)-sphingosylphosphocholine = an N-(acyl)-sphingosyl-1,3-cyclic phosphate + choline. It catalyses the reaction an N-(acyl)-sphingosylphosphoethanolamine = an N-(acyl)-sphingosyl-1,3-cyclic phosphate + ethanolamine. It carries out the reaction a 1-acyl-sn-glycero-3-phosphocholine = a 1-acyl-sn-glycero-2,3-cyclic phosphate + choline. The catalysed reaction is a 1-acyl-sn-glycero-3-phosphoethanolamine = a 1-acyl-sn-glycero-2,3-cyclic phosphate + ethanolamine. Its function is as follows. Dermonecrotic toxins cleave the phosphodiester linkage between the phosphate and headgroup of certain phospholipids (sphingolipid and lysolipid substrates), forming an alcohol (often choline) and a cyclic phosphate. This toxin acts on sphingomyelin (SM). It may also act on ceramide phosphoethanolamine (CPE), lysophosphatidylcholine (LPC) and lysophosphatidylethanolamine (LPE), but not on lysophosphatidylserine (LPS), and lysophosphatidylglycerol (LPG). It acts by transphosphatidylation, releasing exclusively cyclic phosphate products as second products. Induces dermonecrosis, hemolysis, increased vascular permeability, edema, inflammatory response, and platelet aggregation. This Loxosceles aff. spinulosa (strain GJB-2008) (Recluse spider) protein is Dermonecrotic toxin LafSicTox-betaIE1.